Here is a 190-residue protein sequence, read N- to C-terminus: uncharacterized protein (190 aa).

This is an uncharacterized protein from Homo sapiens (Human).